A 564-amino-acid polypeptide reads, in one-letter code: Apyrase (564 aa).

Positions 1 to 25 (MAGKPGIQLFVIFLLLSSFAAVVWA) are cleaved as a signal peptide. Asp48, His50, Asp99, Asn131, His234, and His258 together coordinate a divalent metal cation. AMP is bound at residue Arg371. Asn391 carries N-linked (GlcNAc...) asparagine glycosylation. Residues Arg406, Phe425, and Asp515 each coordinate AMP.

This sequence belongs to the 5'-nucleotidase family. Requires a divalent metal cation as cofactor. Female salivary gland (at protein level). Low-level expression in male tissues. Not detected in female carcasses without salivary glands.

Its subcellular location is the secreted. It catalyses the reaction a ribonucleoside 5'-triphosphate + 2 H2O = a ribonucleoside 5'-phosphate + 2 phosphate + 2 H(+). In terms of biological role, facilitates hematophagy by inhibiting ADP-dependent platelet aggregation in the host. Cleaves adenosine triphosphate (ATP) and adenosine diphosphate (ADP) to adenosine monophosphate (AMP) and inorganic phosphate. May reduce probing time by facilitating the speed of locating blood. The polypeptide is Apyrase (Aedes albopictus (Asian tiger mosquito)).